A 944-amino-acid chain; its full sequence is Breast cancer type 2 susceptibility protein homolog (944 aa).

2 stretches are compositionally biased toward basic and acidic residues: residues 325 to 348 and 415 to 431; these read KKVK…ESKI and NSIK…ETPN. Disordered regions lie at residues 325 to 354 and 415 to 440; these read KKVK…ASCD and NSIK…SSHQ. BRCA2 repeat units lie at residues 543–577, 644–678, and 719–753; these read AEPE…EFQS, NESQ…QSRA, and SETE…EFQA. Disordered regions lie at residues 823-854 and 876-944; these read LCSQ…LDQA and SSTE…RSRY. Polar residues-rich tracts occupy residues 838 to 852 and 876 to 885; these read IHSS…SPLD and SSTETSTSCA. Basic and acidic residues predominate over residues 904-921; it reads ADRDLNRSKDCAKNRQDA. Residues 932 to 944 are compositionally biased toward basic residues; the sequence is KKSRRLGLSRSRY.

As to quaternary structure, interacts with Rad9 and spn-A/Rad51.

It localises to the nucleus. In terms of biological role, involved in and required for double-strand break repair by meiotic and mitotic homologous recombination. During meiosis, has a dual role in the repair of meiotic double-stranded breaks and the efficient activation of the meiotic recombination checkpoint. This chain is Breast cancer type 2 susceptibility protein homolog, found in Drosophila simulans (Fruit fly).